The sequence spans 606 residues: Lysosomal cobalamin transporter ABCD4 (606 aa).

An ABC transmembrane type-1 domain is found at 39 to 332 (NVLMFMTLLC…CFTQLIDLST (294 aa)). Helical transmembrane passes span 43 to 63 (FMTLLCVTLLEQLVIYQVGLI), 76 to 96 (LDGFKALTLLAVTLIVLNSTL), 190 to 210 (IFGYFIVGTMVNKTLMGPIVT), 279 to 299 (YLGSILSYVVIAIPIFSGVYG), and 314 to 334 (AFVCIYLISCFTQLIDLSTTL). The region spanning 389 to 603 (LDRVSILAPS…GGGSWELTRI (215 aa)) is the ABC transporter domain. 421–428 (GNTGTGKT) contacts ATP.

Belongs to the ABC transporter superfamily. ABCD family. Peroxisomal fatty acyl CoA transporter (TC 3.A.1.203) subfamily. Homodimer or heterodimer. Interacts with LMBRD1; this interaction induces the translocation of ABCD4 from the ER to the lysosome membrane. Interacts with LMBRD1 and MMACHC; this interaction ensures the transport of cobalamin from the lysosome to the cytosol.

The protein localises to the endoplasmic reticulum membrane. It is found in the lysosome membrane. The catalysed reaction is an R-cob(III)alamin(out) + ATP + H2O = an R-cob(III)alamin(in) + ADP + phosphate + H(+). Lysosomal membrane protein that transports cobalamin (Vitamin B12) from the lysosomal lumen to the cytosol in an ATP-dependent manner. Targeted by LMBRD1 lysosomal chaperone from the endoplasmic reticulum to the lysosomal membrane. Then forms a complex with lysosomal chaperone LMBRD1 and cytosolic MMACHC to transport cobalamin across the lysosomal membrane. The sequence is that of Lysosomal cobalamin transporter ABCD4 from Mus musculus (Mouse).